Reading from the N-terminus, the 309-residue chain is tRNA dimethylallyltransferase (309 aa).

Residue glycine 11–serine 18 participates in ATP binding. Substrate is bound at residue threonine 13–serine 18. 2 interaction with substrate tRNA regions span residues aspartate 36–glutamine 39 and glutamine 160–arginine 164.

This sequence belongs to the IPP transferase family. As to quaternary structure, monomer. It depends on Mg(2+) as a cofactor.

It carries out the reaction adenosine(37) in tRNA + dimethylallyl diphosphate = N(6)-dimethylallyladenosine(37) in tRNA + diphosphate. In terms of biological role, catalyzes the transfer of a dimethylallyl group onto the adenine at position 37 in tRNAs that read codons beginning with uridine, leading to the formation of N6-(dimethylallyl)adenosine (i(6)A). This is tRNA dimethylallyltransferase from Rickettsia felis (strain ATCC VR-1525 / URRWXCal2) (Rickettsia azadi).